We begin with the raw amino-acid sequence, 333 residues long: 4-hydroxy-3-methylbut-2-enyl diphosphate reductase (333 aa).

Residue Cys20 participates in [4Fe-4S] cluster binding. (2E)-4-hydroxy-3-methylbut-2-enyl diphosphate is bound by residues His49 and His85. Positions 49 and 85 each coordinate dimethylallyl diphosphate. Positions 49 and 85 each coordinate isopentenyl diphosphate. Cys107 is a binding site for [4Fe-4S] cluster. Residue His135 participates in (2E)-4-hydroxy-3-methylbut-2-enyl diphosphate binding. His135 lines the dimethylallyl diphosphate pocket. His135 serves as a coordination point for isopentenyl diphosphate. Glu137 serves as the catalytic Proton donor. Thr176 lines the (2E)-4-hydroxy-3-methylbut-2-enyl diphosphate pocket. Cys206 contacts [4Fe-4S] cluster. Residues Ser234, Ser235, Asn236, and Ser279 each coordinate (2E)-4-hydroxy-3-methylbut-2-enyl diphosphate. Dimethylallyl diphosphate-binding residues include Ser234, Ser235, Asn236, and Ser279. Isopentenyl diphosphate-binding residues include Ser234, Ser235, Asn236, and Ser279.

Belongs to the IspH family. It depends on [4Fe-4S] cluster as a cofactor.

The enzyme catalyses isopentenyl diphosphate + 2 oxidized [2Fe-2S]-[ferredoxin] + H2O = (2E)-4-hydroxy-3-methylbut-2-enyl diphosphate + 2 reduced [2Fe-2S]-[ferredoxin] + 2 H(+). The catalysed reaction is dimethylallyl diphosphate + 2 oxidized [2Fe-2S]-[ferredoxin] + H2O = (2E)-4-hydroxy-3-methylbut-2-enyl diphosphate + 2 reduced [2Fe-2S]-[ferredoxin] + 2 H(+). It participates in isoprenoid biosynthesis; dimethylallyl diphosphate biosynthesis; dimethylallyl diphosphate from (2E)-4-hydroxy-3-methylbutenyl diphosphate: step 1/1. It functions in the pathway isoprenoid biosynthesis; isopentenyl diphosphate biosynthesis via DXP pathway; isopentenyl diphosphate from 1-deoxy-D-xylulose 5-phosphate: step 6/6. Functionally, catalyzes the conversion of 1-hydroxy-2-methyl-2-(E)-butenyl 4-diphosphate (HMBPP) into a mixture of isopentenyl diphosphate (IPP) and dimethylallyl diphosphate (DMAPP). Acts in the terminal step of the DOXP/MEP pathway for isoprenoid precursor biosynthesis. The sequence is that of 4-hydroxy-3-methylbut-2-enyl diphosphate reductase from Rhizobium leguminosarum bv. trifolii (strain WSM2304).